The chain runs to 706 residues: DNA ligase (706 aa).

Residues 1-20 are disordered; that stretch reads MSATAGTADESGVASAAASA. NAD(+)-binding positions include 50–54, 99–100, and Glu128; these read DAEYD and SL. Catalysis depends on Lys130, which acts as the N6-AMP-lysine intermediate. The NAD(+) site is built by Arg151, Glu188, Lys304, and Lys328. Zn(2+) contacts are provided by Cys422, Cys425, Cys440, and Cys446. The 91-residue stretch at 604-694 folds into the BRCT domain; it reads EGPRPLDGVT…VDAASKLAVP (91 aa).

The protein belongs to the NAD-dependent DNA ligase family. LigA subfamily. Mg(2+) is required as a cofactor. The cofactor is Mn(2+).

The catalysed reaction is NAD(+) + (deoxyribonucleotide)n-3'-hydroxyl + 5'-phospho-(deoxyribonucleotide)m = (deoxyribonucleotide)n+m + AMP + beta-nicotinamide D-nucleotide.. Functionally, DNA ligase that catalyzes the formation of phosphodiester linkages between 5'-phosphoryl and 3'-hydroxyl groups in double-stranded DNA using NAD as a coenzyme and as the energy source for the reaction. It is essential for DNA replication and repair of damaged DNA. This Frankia casuarinae (strain DSM 45818 / CECT 9043 / HFP020203 / CcI3) protein is DNA ligase.